A 468-amino-acid chain; its full sequence is Glutamine synthetase (468 aa).

Positions 13 to 97 (NEVKFVDLRF…IRCDILEPAT (85 aa)) constitute a GS beta-grasp domain. The region spanning 105-468 (PRSIAKRAED…PVEFELYYSV (364 aa)) is the GS catalytic domain. The Mg(2+) site is built by glutamate 130 and glutamate 132. Glutamate 208 is an ATP binding site. Mg(2+) is bound by residues glutamate 213 and glutamate 220. Residues 264–265 (NG) and glycine 265 contribute to the L-glutamate site. Mg(2+) is bound at residue histidine 269. ATP is bound by residues 271–273 (HQS) and serine 273. 3 residues coordinate L-glutamate: arginine 321, glutamate 327, and arginine 339. Residues arginine 339, arginine 344, and lysine 352 each contribute to the ATP site. A Mg(2+)-binding site is contributed by glutamate 357. An L-glutamate-binding site is contributed by arginine 359. Tyrosine 397 carries the post-translational modification O-AMP-tyrosine.

It belongs to the glutamine synthetase family. Oligomer of 12 subunits arranged in the form of two hexameric ring. Mg(2+) serves as cofactor.

The protein resides in the cytoplasm. The catalysed reaction is L-glutamate + NH4(+) + ATP = L-glutamine + ADP + phosphate + H(+). The activity of this enzyme could be controlled by adenylation under conditions of abundant glutamine. In terms of biological role, catalyzes the ATP-dependent biosynthesis of glutamine from glutamate and ammonia. This Vibrio alginolyticus protein is Glutamine synthetase.